The following is a 176-amino-acid chain: NAD(P)H-quinone oxidoreductase subunit 6, chloroplastic (176 aa).

The next 5 helical transmembrane spans lie at 10-30 (FLLVFLGSGLILGGLGVVLLP), 32-52 (PIYSAFSLGLVLVCTSLFYIL), 61-81 (AQLLIYVGAINVLIIFAVMFM), 92-112 (LWTVGDGVTSMVCTSIFVSLI), and 152-172 (FFLPFELISIILLVSLIGAIT).

This sequence belongs to the complex I subunit 6 family. In terms of assembly, NDH is composed of at least 16 different subunits, 5 of which are encoded in the nucleus.

Its subcellular location is the plastid. It is found in the chloroplast thylakoid membrane. The catalysed reaction is a plastoquinone + NADH + (n+1) H(+)(in) = a plastoquinol + NAD(+) + n H(+)(out). It catalyses the reaction a plastoquinone + NADPH + (n+1) H(+)(in) = a plastoquinol + NADP(+) + n H(+)(out). NDH shuttles electrons from NAD(P)H:plastoquinone, via FMN and iron-sulfur (Fe-S) centers, to quinones in the photosynthetic chain and possibly in a chloroplast respiratory chain. The immediate electron acceptor for the enzyme in this species is believed to be plastoquinone. Couples the redox reaction to proton translocation, and thus conserves the redox energy in a proton gradient. This chain is NAD(P)H-quinone oxidoreductase subunit 6, chloroplastic (ndhG), found in Daucus carota (Wild carrot).